Here is a 412-residue protein sequence, read N- to C-terminus: ORC1-type DNA replication protein 2 (412 aa).

ATP is bound by residues 61-65 (VGKTA), Y207, and R219.

It belongs to the CDC6/cdc18 family.

In terms of biological role, involved in regulation of DNA replication. The sequence is that of ORC1-type DNA replication protein 2 (cdc6b) from Haloarcula marismortui (strain ATCC 43049 / DSM 3752 / JCM 8966 / VKM B-1809) (Halobacterium marismortui).